The chain runs to 162 residues: Phosphopantetheine adenylyltransferase (162 aa).

A substrate-binding site is contributed by T9. ATP-binding positions include 9–10 (TF) and H17. Substrate-binding residues include K41, L73, and R87. ATP contacts are provided by residues 88–90 (GLR), E98, and 123–129 (LSYISSS).

The protein belongs to the bacterial CoaD family. As to quaternary structure, homohexamer. Mg(2+) is required as a cofactor.

It localises to the cytoplasm. The catalysed reaction is (R)-4'-phosphopantetheine + ATP + H(+) = 3'-dephospho-CoA + diphosphate. It participates in cofactor biosynthesis; coenzyme A biosynthesis; CoA from (R)-pantothenate: step 4/5. In terms of biological role, reversibly transfers an adenylyl group from ATP to 4'-phosphopantetheine, yielding dephospho-CoA (dPCoA) and pyrophosphate. This chain is Phosphopantetheine adenylyltransferase, found in Teredinibacter turnerae (strain ATCC 39867 / T7901).